A 145-amino-acid chain; its full sequence is D-aminoacyl-tRNA deacylase (145 aa).

Residues 137 to 138 carry the Gly-cisPro motif, important for rejection of L-amino acids motif; the sequence is GP.

Belongs to the DTD family. As to quaternary structure, homodimer.

The protein localises to the cytoplasm. The catalysed reaction is glycyl-tRNA(Ala) + H2O = tRNA(Ala) + glycine + H(+). The enzyme catalyses a D-aminoacyl-tRNA + H2O = a tRNA + a D-alpha-amino acid + H(+). An aminoacyl-tRNA editing enzyme that deacylates mischarged D-aminoacyl-tRNAs. Also deacylates mischarged glycyl-tRNA(Ala), protecting cells against glycine mischarging by AlaRS. Acts via tRNA-based rather than protein-based catalysis; rejects L-amino acids rather than detecting D-amino acids in the active site. By recycling D-aminoacyl-tRNA to D-amino acids and free tRNA molecules, this enzyme counteracts the toxicity associated with the formation of D-aminoacyl-tRNA entities in vivo and helps enforce protein L-homochirality. The protein is D-aminoacyl-tRNA deacylase of Cereibacter sphaeroides (strain ATCC 17029 / ATH 2.4.9) (Rhodobacter sphaeroides).